A 111-amino-acid polypeptide reads, in one-letter code: uncharacterized protein (111 aa).

The signal sequence occupies residues 1-18 (MGKSMEEGIFVKVFPSKA).

This is an uncharacterized protein from Acidianus convivator (ATV).